The sequence spans 539 residues: Chaperonin GroEL (539 aa).

Residues 30-33 (TLGP), Lys51, 87-91 (DGTTT), Gly415, and Asp495 each bind ATP.

Belongs to the chaperonin (HSP60) family. Forms a cylinder of 14 subunits composed of two heptameric rings stacked back-to-back. Interacts with the co-chaperonin GroES.

The protein localises to the cytoplasm. The enzyme catalyses ATP + H2O + a folded polypeptide = ADP + phosphate + an unfolded polypeptide.. Functionally, together with its co-chaperonin GroES, plays an essential role in assisting protein folding. The GroEL-GroES system forms a nano-cage that allows encapsulation of the non-native substrate proteins and provides a physical environment optimized to promote and accelerate protein folding. The protein is Chaperonin GroEL of Serratia rubidaea (Serratia marinorubra).